Reading from the N-terminus, the 461-residue chain is Chromosomal replication initiator protein DnaA (461 aa).

A domain I, interacts with DnaA modulators region spans residues 1 to 83 (MDHSPWQRCL…LRFDVGSKPT (83 aa)). The segment at 83 to 124 (TIDNSVTNSPVSRNTGGNESLFAKATSAPKVAEPESNIPKKT) is domain II. Residues 125–341 (NVRLNYTFEN…GALNRVIANA (217 aa)) are domain III, AAA+ region. The ATP site is built by Gly-169, Gly-171, Lys-172, and Thr-173. Residues 342 to 461 (NFTGRAITID…YSNLIRTLSS (120 aa)) form a domain IV, binds dsDNA region.

This sequence belongs to the DnaA family. Oligomerizes as a right-handed, spiral filament on DNA at oriC.

The protein resides in the cytoplasm. Its function is as follows. Plays an essential role in the initiation and regulation of chromosomal replication. ATP-DnaA binds to the origin of replication (oriC) to initiate formation of the DNA replication initiation complex once per cell cycle. Binds the DnaA box (a 9 base pair repeat at the origin) and separates the double-stranded (ds)DNA. Forms a right-handed helical filament on oriC DNA; dsDNA binds to the exterior of the filament while single-stranded (ss)DNA is stabiized in the filament's interior. The ATP-DnaA-oriC complex binds and stabilizes one strand of the AT-rich DNA unwinding element (DUE), permitting loading of DNA polymerase. After initiation quickly degrades to an ADP-DnaA complex that is not apt for DNA replication. Binds acidic phospholipids. The polypeptide is Chromosomal replication initiator protein DnaA (Colwellia psychrerythraea (strain 34H / ATCC BAA-681) (Vibrio psychroerythus)).